An 818-amino-acid chain; its full sequence is Sodium/hydrogen exchanger 1 (818 aa).

At 1–98 (MLLWPGASGL…FPVLGIDYQH (98 aa)) the chain is on the extracellular side. The interval 44-76 (STIRGSEPPRERSIGDVTTAPPELAPESRPVNH) is disordered. The N-linked (GlcNAc...) asparagine glycan is linked to N75. Residues 99–121 (VRIPFEIALWILLACLMKIGFHV) traverse the membrane as a helical segment. At 122-130 (IPTISSIVP) the chain is on the cytoplasmic side. A helical membrane pass occupies residues 131–148 (ESCLLIVVGLLVGGLIKG). Residues 149–158 (VGETPPILQS) lie on the Extracellular side of the membrane. Residues 159 to 176 (EVFFLFLLPPIILDAGYF) traverse the membrane as a helical segment. The Cytoplasmic segment spans residues 177-186 (LPLRQFTENL). Residues 187–215 (GTILIFAVVGTLWNAFFLGGLMYAVCLVG) form a helical membrane-spanning segment. Residues 216–222 (GEQINNI) lie on the Extracellular side of the membrane. Residues 223-249 (GLLENLLFGSIISAVDPVAVLAVFEEI) traverse the membrane as a helical segment. The Cytoplasmic portion of the chain corresponds to 250-252 (HIN). Residues 253–283 (ELLHILVFGESLLNDAVTVVLYHLFEEFANY) traverse the membrane as a helical segment. Residues 284 to 287 (DRVG) are Extracellular-facing. Residues 288–322 (IVDIILGFLSFFVVSLGGVFVGVVYGVIAAFTSRF) traverse the membrane as a helical segment. The Cytoplasmic segment spans residues 323-328 (TSHIRV). Residues 329 to 341 (IEPLFVFLYSYMA) form a helical membrane-spanning segment. Residues 342–350 (YLSAELFHL) lie on the Extracellular side of the membrane. Residues 351–371 (SGIMALIASGVVMRPYVEANI) form a helical membrane-spanning segment. Residues 372-373 (SH) are Cytoplasmic-facing. The chain crosses the membrane as a helical span at residues 374 to 404 (KSHTTIKYFLKMWSSVSETLIFIFLGVSTVA). Topologically, residues 405–410 (GSHHWN) are extracellular. A helical membrane pass occupies residues 411 to 438 (WTFVISTLLFCLIARVLGVLGLTWFINK). The Cytoplasmic portion of the chain corresponds to 439–444 (FRIVKL). The helical transmembrane segment at 445 to 469 (TPKDQFIIAYGGLRGAIAFSLGYLL) threads the bilayer. The Extracellular segment spans residues 470 to 475 (DKKHFP). The chain crosses the membrane as a helical span at residues 476–505 (MCDLFLTAIITVIFFTVFVQGMTIRPLVDL). The interaction with TESC stretch occupies residues 503–545 (VDLLAVKKKQETKRSINEEIHTQFLDHLLTGIEDICGHYGHHH). Residues 506–818 (LAVKKKQETK…EGEPFIPKGQ (313 aa)) are Cytoplasmic-facing. The interval 509 to 516 (KKKQETKR) is PI(4,5)P2-binding region. The tract at residues 515–545 (KRSINEEIHTQFLDHLLTGIEDICGHYGHHH) is interaction with CHP2. Positions 540-545 (HYGHHH) are confers pH-dependent PI(4,5)P2 binding. The segment at 552–560 (RFNKKYVKK) is PI(4,5)P2-binding region. Residues S599 and S602 each carry the phosphoserine modification. Phosphothreonine is present on T603. A phosphoserine mark is found at S605 and S648. An interaction with TESC region spans residues 633–818 (KILRNNLQKT…EGEPFIPKGQ (186 aa)). The tract at residues 633 to 818 (KILRNNLQKT…EGEPFIPKGQ (186 aa)) is interaction with CALM1. The interval 684–687 (LTVP) is interaction with PPP3CA. Phosphoserine is present on residues S693, S697, and S703. Residues 715–720 (PVITID) form an interaction with PPP3CA region. Phosphoserine occurs at positions 723, 726, and 729. The segment at 741-818 (VLGLSRDPGR…EGEPFIPKGQ (78 aa)) is disordered. Phosphothreonine is present on T782. Over residues 785–794 (PSDSPSSQRI) the composition is skewed to polar residues. Residues S788, S790, and S799 each carry the phosphoserine modification.

This sequence belongs to the monovalent cation:proton antiporter 1 (CPA1) transporter (TC 2.A.36) family. In terms of assembly, homodimer; dimerization is crucial for its function. Oligomer. Interacts with CALM in a calcium-dependent manner. Interacts with TESC. Interacts (via the juxtamembrane region of the cytoplasmic C-terminal domain) with CHP1; the interaction occurs at the plasma membrane in a calcium-dependent manner. Interacts with CHP2; the interaction occurs in a calcium-dependent manner. Interacts with EZR; regulates the cytoskeletal interactions of SLC9A1 and promotes stress fiber formation. Ubiquitinated, leading to its degradation by the proteasome. Ubiquitination is reduced by CHP1. Post-translationally, O-glycosylated. In terms of processing, palmitoylated; may play a major role in SLC9A1 regulation. Phosphorylation at Thr-782 increases SLC9A1 activity. Specifically dephosphorylated at Thr-782 by PPP3CA that negatively regulates SLC9A1 activity. Phosphorylation at Ser-648 by AKT1 reduces SLC9A1 binding to CALM1.

It is found in the cell membrane. It localises to the basolateral cell membrane. The enzyme catalyses Na(+)(in) + H(+)(out) = Na(+)(out) + H(+)(in). The catalysed reaction is Li(+)(out) + H(+)(in) = Li(+)(in) + H(+)(out). It catalyses the reaction Li(+)(in) + Na(+)(out) = Li(+)(out) + Na(+)(in). Activated at acidic pHs. Inhibited by amiloride and 5-amino-substituted derivatives. Inhibited by cariporide and eniporide. Phosphatidylinositol 4,5-bisphosphate (PI(4,5)P2) and phosphatidylinositol 3,4,5-trisphosphate (PI(3,4,5)P3) bind and differentially regulate SLC9A1 activity. Functionally, electroneutral Na(+) /H(+) antiporter that extrudes Na(+) in exchange for external protons driven by the inward sodium ion chemical gradient, protecting cells from acidification that occurs from metabolism. Exchanges intracellular H(+) ions for extracellular Na(+) in 1:1 stoichiometry. Plays a key role in maintening intracellular pH neutral and cell volume, and thus is important for cell growth, proliferation, migration and survival. In addition, can transport lithium Li(+) and also functions as a Na(+)/Li(+) antiporter. SLC9A1 also functions in membrane anchoring and organization of scaffolding complexes that coordinate signaling inputs. In Bos taurus (Bovine), this protein is Sodium/hydrogen exchanger 1 (SLC9A1).